A 73-amino-acid polypeptide reads, in one-letter code: UPF0154 protein LGAS_0795 (73 aa).

Residues 3 to 23 form a helical membrane-spanning segment; the sequence is LGLAIFLIIIALLIGLVGGFY.

This sequence belongs to the UPF0154 family.

The protein localises to the cell membrane. In Lactobacillus gasseri (strain ATCC 33323 / DSM 20243 / BCRC 14619 / CIP 102991 / JCM 1131 / KCTC 3163 / NCIMB 11718 / NCTC 13722 / AM63), this protein is UPF0154 protein LGAS_0795.